Here is a 441-residue protein sequence, read N- to C-terminus: Adenylyltransferase and sulfurtransferase MOCS3 (441 aa).

ATP is bound by residues G83, D104, 111–115, K128, and 172–173; these read TNLHR and DN. Zn(2+)-binding residues include C213 and C216. Catalysis depends on C230, which acts as the Glycyl thioester intermediate; for adenylyltransferase activity. The Zn(2+) site is built by C288 and C291. One can recognise a Rhodanese domain in the interval 339 to 439; sequence AGRDHLLVDV…WTKTIDPNFP (101 aa). C395 acts as the Cysteine persulfide intermediate; for sulfurtransferase activity in catalysis.

It in the N-terminal section; belongs to the HesA/MoeB/ThiF family. UBA4 subfamily. It depends on Zn(2+) as a cofactor.

The protein resides in the cytoplasm. It catalyses the reaction [molybdopterin-synthase sulfur-carrier protein]-C-terminal Gly-Gly + ATP + H(+) = [molybdopterin-synthase sulfur-carrier protein]-C-terminal Gly-Gly-AMP + diphosphate. The catalysed reaction is [molybdopterin-synthase sulfur-carrier protein]-C-terminal Gly-Gly-AMP + S-sulfanyl-L-cysteinyl-[cysteine desulfurase] + AH2 = [molybdopterin-synthase sulfur-carrier protein]-C-terminal-Gly-aminoethanethioate + L-cysteinyl-[cysteine desulfurase] + A + AMP + 2 H(+). Its pathway is tRNA modification; 5-methoxycarbonylmethyl-2-thiouridine-tRNA biosynthesis. It participates in cofactor biosynthesis; molybdopterin biosynthesis. Functionally, plays a central role in 2-thiolation of mcm(5)S(2)U at tRNA wobble positions of cytosolic tRNA(Lys), tRNA(Glu) and tRNA(Gln). Also essential during biosynthesis of the molybdenum cofactor. Acts by mediating the C-terminal thiocarboxylation of sulfur carriers URM1 and MOCS2A. Its N-terminus first activates URM1 and MOCS2A as acyl-adenylates (-COAMP), then the persulfide sulfur on the catalytic cysteine is transferred to URM1 and MOCS2A to form thiocarboxylation (-COSH) of their C-terminus. The reaction probably involves hydrogen sulfide that is generated from the persulfide intermediate and that acts as a nucleophile towards URM1 and MOCS2A. Subsequently, a transient disulfide bond is formed. Does not use thiosulfate as sulfur donor; NFS1 probably acting as a sulfur donor for thiocarboxylation reactions. The polypeptide is Adenylyltransferase and sulfurtransferase MOCS3 (Anopheles gambiae (African malaria mosquito)).